The primary structure comprises 376 residues: Lactosylceramide 1,3-N-acetyl-beta-D-glucosaminyltransferase (376 aa).

The Cytoplasmic portion of the chain corresponds to 1 to 13; it reads MRLFVSRRVKRWK. A helical; Signal-anchor for type II membrane protein membrane pass occupies residues 14 to 34; the sequence is IFHFFVTCFILSFMVFWSPIN. Over 35-376 the chain is Lumenal; that stretch reads NYIMSHMKSY…NSYPCWAAFA (342 aa). The N-linked (GlcNAc...) asparagine glycan is linked to asparagine 57.

This sequence belongs to the glycosyltransferase 31 family. In terms of tissue distribution, highly expressed in adult spleen, placenta and cerebellar Purkinje cells where it colocalizes with HNK-1. Expressed at lower level in brain, lung, thymus and muscle.

The protein resides in the golgi apparatus membrane. The enzyme catalyses a beta-D-Gal-(1-&gt;4)-beta-D-Glc-(1&lt;-&gt;1)-Cer(d18:1(4E)) + UDP-N-acetyl-alpha-D-glucosamine = a beta-D-GlcNAc-(1-&gt;3)-beta-D-Gal-(1-&gt;4)-beta-D-Glc-(1&lt;-&gt;1)-Cer(d18:1(4E)) + UDP + H(+). It carries out the reaction a neolactoside nLc4Cer(d18:1(4E)) + UDP-N-acetyl-alpha-D-glucosamine = a neolactoside IV(3)-beta-GlcNAc-nLc4Cer(d18:1(4E)) + UDP + H(+). It participates in protein modification; protein glycosylation. In terms of biological role, beta-1,3-N-acetylglucosaminyltransferase that plays a key role in the synthesis of lacto- or neolacto-series carbohydrate chains on glycolipids, notably by participating in biosynthesis of HNK-1 and Lewis X carbohydrate structures. Has strong activity toward lactosylceramide (LacCer) and neolactotetraosylceramide (nLc(4)Cer; paragloboside), resulting in the synthesis of Lc(3)Cer and neolactopentaosylceramide (nLc(5)Cer), respectively. Plays a central role in regulating neolacto-series glycolipid synthesis during embryonic development. The sequence is that of Lactosylceramide 1,3-N-acetyl-beta-D-glucosaminyltransferase from Mus musculus (Mouse).